The sequence spans 271 residues: Putative phosphoenolpyruvate synthase regulatory protein (271 aa).

G152–T159 lines the ADP pocket.

It belongs to the pyruvate, phosphate/water dikinase regulatory protein family. PSRP subfamily.

The enzyme catalyses [pyruvate, water dikinase] + ADP = [pyruvate, water dikinase]-phosphate + AMP + H(+). It carries out the reaction [pyruvate, water dikinase]-phosphate + phosphate + H(+) = [pyruvate, water dikinase] + diphosphate. Bifunctional serine/threonine kinase and phosphorylase involved in the regulation of the phosphoenolpyruvate synthase (PEPS) by catalyzing its phosphorylation/dephosphorylation. The sequence is that of Putative phosphoenolpyruvate synthase regulatory protein from Thiocapsa roseopersicina.